A 483-amino-acid chain; its full sequence is Glutamyl-tRNA(Gln) amidotransferase subunit A (483 aa).

Residues lysine 77 and serine 152 each act as charge relay system in the active site. Serine 176 (acyl-ester intermediate) is an active-site residue.

This sequence belongs to the amidase family. GatA subfamily. Heterotrimer of A, B and C subunits.

It carries out the reaction L-glutamyl-tRNA(Gln) + L-glutamine + ATP + H2O = L-glutaminyl-tRNA(Gln) + L-glutamate + ADP + phosphate + H(+). Allows the formation of correctly charged Gln-tRNA(Gln) through the transamidation of misacylated Glu-tRNA(Gln) in organisms which lack glutaminyl-tRNA synthetase. The reaction takes place in the presence of glutamine and ATP through an activated gamma-phospho-Glu-tRNA(Gln). This chain is Glutamyl-tRNA(Gln) amidotransferase subunit A, found in Listeria welshimeri serovar 6b (strain ATCC 35897 / DSM 20650 / CCUG 15529 / CIP 8149 / NCTC 11857 / SLCC 5334 / V8).